The chain runs to 419 residues: uncharacterized protein (419 aa).

Helical transmembrane passes span 5–25 (MIIV…ALII), 26–46 (AAGV…AQQI), 53–73 (FPML…GGEL), 102–122 (VFGG…SVLI), 144–164 (VIDV…VSGV), 170–190 (FVAG…VCWF), 210–230 (ATLA…ILFL), 234–254 (LATP…LSLL), 274–294 (ATGV…VLTF), 309–329 (ISSP…VGMP), 332–352 (MPPA…TIGL), 360–380 (MMVI…TLFI), and 396–416 (LWPF…IPAL).

The protein belongs to the YiaN/YgiK family.

Its subcellular location is the cell inner membrane. This is an uncharacterized protein from Sinorhizobium fredii (strain NBRC 101917 / NGR234).